A 515-amino-acid chain; its full sequence is Putative asparagine synthetase [glutamine-hydrolyzing] 2 (515 aa).

Residue Cys2 is the For GATase activity of the active site. The Glutamine amidotransferase type-2 domain occupies 2–229; the sequence is CGINGIIRFG…ARQNLIFDLD (228 aa). Residues 52–56, 92–94, and Asp114 each bind L-glutamine; these read RLAIL and NGE. Residues Ile306 and 378–379 contribute to the ATP site; that span reads SG.

It belongs to the asparagine synthetase family.

The catalysed reaction is L-aspartate + L-glutamine + ATP + H2O = L-asparagine + L-glutamate + AMP + diphosphate + H(+). It participates in amino-acid biosynthesis; L-asparagine biosynthesis; L-asparagine from L-aspartate (L-Gln route): step 1/1. The sequence is that of Putative asparagine synthetase [glutamine-hydrolyzing] 2 from Methanocaldococcus jannaschii (strain ATCC 43067 / DSM 2661 / JAL-1 / JCM 10045 / NBRC 100440) (Methanococcus jannaschii).